We begin with the raw amino-acid sequence, 102 residues long: UPF0251 protein ASA_1331 (102 aa).

This sequence belongs to the UPF0251 family.

The polypeptide is UPF0251 protein ASA_1331 (Aeromonas salmonicida (strain A449)).